The following is a 140-amino-acid chain: Ribosome maturation factor RimP (140 aa).

The protein belongs to the RimP family.

It localises to the cytoplasm. Functionally, required for maturation of 30S ribosomal subunits. In Campylobacter jejuni subsp. doylei (strain ATCC BAA-1458 / RM4099 / 269.97), this protein is Ribosome maturation factor RimP.